A 367-amino-acid chain; its full sequence is Alginate lyase (367 aa).

The N-terminal stretch at 1–24 (MTAFKRIFSPALLVLALYGGAAHA) is a signal peptide. Residues 63-64 (SK), 136-137 (HT), and Y254 each bind substrate.

The protein belongs to the polysaccharide lyase 5 family.

Its subcellular location is the periplasm. The enzyme catalyses Eliminative cleavage of alginate to give oligosaccharides with 4-deoxy-alpha-L-erythro-hex-4-enuronosyl groups at their non-reducing ends and beta-D-mannuronate at their reducing end.. In terms of biological role, catalyzes the depolymerization of alginate by cleaving the beta-1,4 glycosidic bond between two adjacent sugar residues via a beta-elimination mechanism. May serve to degrade mislocalized alginate that is trapped in the periplasmic space. This chain is Alginate lyase, found in Pseudomonas putida (strain W619).